The chain runs to 366 residues: Aminomethyltransferase (366 aa).

Belongs to the GcvT family. As to quaternary structure, the glycine cleavage system is composed of four proteins: P, T, L and H.

The enzyme catalyses N(6)-[(R)-S(8)-aminomethyldihydrolipoyl]-L-lysyl-[protein] + (6S)-5,6,7,8-tetrahydrofolate = N(6)-[(R)-dihydrolipoyl]-L-lysyl-[protein] + (6R)-5,10-methylene-5,6,7,8-tetrahydrofolate + NH4(+). Functionally, the glycine cleavage system catalyzes the degradation of glycine. This chain is Aminomethyltransferase, found in Moorella thermoacetica (strain ATCC 39073 / JCM 9320).